A 952-amino-acid polypeptide reads, in one-letter code: Germ layers disorganized gldi-3 (952 aa).

The 62-residue stretch at K39–L100 folds into the FHA domain. Disordered regions lie at residues I174 to T220, G483 to V639, and A652 to C866. 2 stretches are compositionally biased toward polar residues: residues P179–G195 and N202–T220. The segment covering E523–D537 has biased composition (acidic residues). The span at P553–V568 shows a compositional bias: basic and acidic residues. Polar residues-rich tracts occupy residues R569 to A584 and V600 to S620. Residues S662–V679 show a composition bias toward low complexity. The span at T685–R706 shows a compositional bias: basic and acidic residues. A compositionally biased stretch (low complexity) spans S715 to E724. Basic and acidic residues predominate over residues S725–D742. The span at T761 to R772 shows a compositional bias: basic residues. Positions V789 to E800 are enriched in acidic residues. Basic and acidic residues-rich tracts occupy residues I823–D832 and P856–C866.

The protein localises to the nucleus. In terms of biological role, potential transcription factor that may play a role in the regulation of genes involved in cell cycle G1/S transition. May bind to regulatory elements of genes. The sequence is that of Germ layers disorganized gldi-3 from Caenorhabditis elegans.